The chain runs to 405 residues: Formate-dependent phosphoribosylglycinamide formyltransferase (405 aa).

N(1)-(5-phospho-beta-D-ribosyl)glycinamide contacts are provided by residues 22–23 and glutamate 82; that span reads EL. Residues arginine 115, lysine 162, 167–172, 202–205, and glutamate 210 contribute to the ATP site; these read SSGKGQ and EGFI. The ATP-grasp domain maps to 120-320; the sequence is RLAAETLGLP…EFELHARAIL (201 aa). 2 residues coordinate Mg(2+): glutamate 279 and glutamate 291. Residues aspartate 298, lysine 367, and 374 to 375 contribute to the N(1)-(5-phospho-beta-D-ribosyl)glycinamide site; that span reads RR.

The protein belongs to the PurK/PurT family. Homodimer.

The catalysed reaction is N(1)-(5-phospho-beta-D-ribosyl)glycinamide + formate + ATP = N(2)-formyl-N(1)-(5-phospho-beta-D-ribosyl)glycinamide + ADP + phosphate + H(+). It functions in the pathway purine metabolism; IMP biosynthesis via de novo pathway; N(2)-formyl-N(1)-(5-phospho-D-ribosyl)glycinamide from N(1)-(5-phospho-D-ribosyl)glycinamide (formate route): step 1/1. Involved in the de novo purine biosynthesis. Catalyzes the transfer of formate to 5-phospho-ribosyl-glycinamide (GAR), producing 5-phospho-ribosyl-N-formylglycinamide (FGAR). Formate is provided by PurU via hydrolysis of 10-formyl-tetrahydrofolate. This is Formate-dependent phosphoribosylglycinamide formyltransferase from Leptothrix cholodnii (strain ATCC 51168 / LMG 8142 / SP-6) (Leptothrix discophora (strain SP-6)).